The chain runs to 394 residues: NAD(P)H-quinone oxidoreductase subunit H (394 aa).

It belongs to the complex I 49 kDa subunit family. As to quaternary structure, NDH-1 can be composed of about 15 different subunits; different subcomplexes with different compositions have been identified which probably have different functions.

Its subcellular location is the cellular thylakoid membrane. The catalysed reaction is a plastoquinone + NADH + (n+1) H(+)(in) = a plastoquinol + NAD(+) + n H(+)(out). The enzyme catalyses a plastoquinone + NADPH + (n+1) H(+)(in) = a plastoquinol + NADP(+) + n H(+)(out). Functionally, NDH-1 shuttles electrons from an unknown electron donor, via FMN and iron-sulfur (Fe-S) centers, to quinones in the respiratory and/or the photosynthetic chain. The immediate electron acceptor for the enzyme in this species is believed to be plastoquinone. Couples the redox reaction to proton translocation, and thus conserves the redox energy in a proton gradient. Cyanobacterial NDH-1 also plays a role in inorganic carbon-concentration. This Trichormus variabilis (strain ATCC 29413 / PCC 7937) (Anabaena variabilis) protein is NAD(P)H-quinone oxidoreductase subunit H.